Consider the following 545-residue polypeptide: CTP synthase (545 aa).

The amidoligase domain stretch occupies residues 1–266; that stretch reads MTTNYIFVTG…DDYICKRFSL (266 aa). Residue S14 coordinates CTP. Residue S14 coordinates UTP. ATP-binding positions include 15-20 and D72; that span reads SLGKGI. 2 residues coordinate Mg(2+): D72 and E140. CTP-binding positions include 147 to 149, 187 to 192, and K223; these read DIE and KTKPTQ. UTP contacts are provided by residues 187–192 and K223; that span reads KTKPTQ. 239–241 contributes to the ATP binding site; that stretch reads KDV. The region spanning 291–542 is the Glutamine amidotransferase type-1 domain; sequence TIGMVGKYIE…VKAASEYQKR (252 aa). G352 contributes to the L-glutamine binding site. Catalysis depends on C379, which acts as the Nucleophile; for glutamine hydrolysis. L-glutamine-binding positions include 380–383, E403, and R470; that span reads LGMQ. Residues H515 and E517 contribute to the active site.

This sequence belongs to the CTP synthase family. In terms of assembly, homotetramer.

It carries out the reaction UTP + L-glutamine + ATP + H2O = CTP + L-glutamate + ADP + phosphate + 2 H(+). The enzyme catalyses L-glutamine + H2O = L-glutamate + NH4(+). It catalyses the reaction UTP + NH4(+) + ATP = CTP + ADP + phosphate + 2 H(+). It participates in pyrimidine metabolism; CTP biosynthesis via de novo pathway; CTP from UDP: step 2/2. With respect to regulation, allosterically activated by GTP, when glutamine is the substrate; GTP has no effect on the reaction when ammonia is the substrate. The allosteric effector GTP functions by stabilizing the protein conformation that binds the tetrahedral intermediate(s) formed during glutamine hydrolysis. Inhibited by the product CTP, via allosteric rather than competitive inhibition. Its function is as follows. Catalyzes the ATP-dependent amination of UTP to CTP with either L-glutamine or ammonia as the source of nitrogen. Regulates intracellular CTP levels through interactions with the four ribonucleotide triphosphates. This is CTP synthase from Enterobacter sp. (strain 638).